The following is a 469-amino-acid chain: Small ribosomal subunit protein mS29 (469 aa).

Residue L150 coordinates ATP.

It belongs to the mitochondrion-specific ribosomal protein mS29 family. Component of the mitochondrial small ribosomal subunit (mt-SSU). Mature N.crassa 74S mitochondrial ribosomes consist of a small (37S) and a large (54S) subunit. The 37S small subunit contains a 16S ribosomal RNA (16S mt-rRNA) and 32 different proteins. The 54S large subunit contains a 23S rRNA (23S mt-rRNA) and 42 different proteins.

It is found in the mitochondrion. Its function is as follows. Component of the mitochondrial ribosome (mitoribosome), a dedicated translation machinery responsible for the synthesis of mitochondrial genome-encoded proteins, including at least some of the essential transmembrane subunits of the mitochondrial respiratory chain. The mitoribosomes are attached to the mitochondrial inner membrane and translation products are cotranslationally integrated into the membrane. In Neurospora crassa (strain ATCC 24698 / 74-OR23-1A / CBS 708.71 / DSM 1257 / FGSC 987), this protein is Small ribosomal subunit protein mS29 (rsm23).